Consider the following 347-residue polypeptide: MHIPDGYLSPVTCAVTFAATVPFWYVSMRKLDRDLNGQHLPLVALVAAFSFVIMMFNLPIPGGTTAHAAGIGIAAVLLGPWAAVPAISVALLIQAIFFGDGGITAFGANCLNMAVVGPMVAAAVYALGTRGAAIGSRRRVIMAGLASYAGLNAAALLAAVEFGVQPLFFHDAAGAPLYAPYPLSVAVPAMALTHLTIAGAAEFIVTAGLVAWLQRSNPELLAPRRAPAAPERHLRLWAGIGALVVLCPLGLIAAGTAWGEWGAEDFTSEAGRAAMAGASGGVAPPAGLPGGFARLAELWSAPLPDYAPAFVQNAPLGYVLSALLGVALIVAGIGLSAGLRALTRRAG.

The next 9 helical transmembrane spans lie at 6 to 26 (GYLSPVTCAVTFAATVPFWYV), 40 to 60 (LPLVALVAAFSFVIMMFNLPI), 73 to 93 (IAAVLLGPWAAVPAISVALLI), 96 to 116 (IFFGDGGITAFGANCLNMAVV), 140 to 160 (VIMAGLASYAGLNAAALLAAV), 185 to 205 (VAVPAMALTHLTIAGAAEFIV), 236 to 256 (LWAGIGALVVLCPLGLIAAGT), 273 to 293 (AAMAGASGGVAPPAGLPGGFA), and 319 to 339 (VLSALLGVALIVAGIGLSAGL).

The protein belongs to the CbiM family. NikM subfamily. Forms an energy-coupling factor (ECF) transporter complex composed of an ATP-binding protein (A component, NikO), a transmembrane protein (T component, NikQ) and a fused possible substrate-capture protein (S component, NikMN) of unknown stoichimetry.

Its subcellular location is the cell inner membrane. Functionally, part of the energy-coupling factor (ECF) transporter complex NikMNQO involved in nickel import. The complex confers nickel uptake upon expression in E.coli; can also transport cobalt with a very low affinity. In Rhodobacter capsulatus (strain ATCC BAA-309 / NBRC 16581 / SB1003), this protein is Fused nickel transport protein NikMN (nikMN).